The following is a 64-amino-acid chain: Small ribosomal subunit protein bS21 (64 aa).

This sequence belongs to the bacterial ribosomal protein bS21 family.

The sequence is that of Small ribosomal subunit protein bS21 from Karelsulcia muelleri (strain GWSS) (Sulcia muelleri).